Consider the following 181-residue polypeptide: MSGAEDNKSSHAQLSSQIFLDLVDSVIADVASECHRVARLGLDRDLDIVEEELRLSVEARAKIADPSNNLETNTKYVVDIFGQTHPPVASEVFNCMNCGRQIVAGRFAPHLEKCMGKGRKARAKTTRSTTAAQNRNARRSPNPRYSPYPNSASENQLASGSPGVAGEDCSNFTVRENVKGD.

The SGF11-type zinc-finger motif lies at Phe-93–Cys-114. Residues Gly-116–Thr-125 are compositionally biased toward basic residues. The disordered stretch occupies residues Gly-116–Asp-181. Residues Thr-126 to Ser-153 are compositionally biased toward low complexity.

Belongs to the SGF11 family. As to quaternary structure, component of a deubiquitination module (DUB module) formed by ENY2, SGF11, and UBP22 in Arabidopsis. Interacts directly with ENY2 and UBP22. Interacts with DDA1. Ubiquitinated in DET1-dependent manner. Ubiquitination probably leads to its subsequent proteasomal degradation.

The protein localises to the nucleus. It localises to the nucleoplasm. Functionally, component of a deubiquitination module (DUB module) that specifically deubiquinates monoubiquinated histone H2B (H2Bub). Does not seem to be a component of the TREX-2 complex. Seems to act independently of the SAGA multiprotein complex. The DUB module is responsible for the major H2Bub deubiquitinase activity in Arabidopsis. The protein is SAGA-associated factor 11 of Arabidopsis thaliana (Mouse-ear cress).